The following is a 344-amino-acid chain: Glyceraldehyde-3-phosphate dehydrogenase (344 aa).

NAD(+) contacts are provided by residues 11–12 (TI) and G110. 139–141 (SCN) lines the D-glyceraldehyde 3-phosphate pocket. C140 functions as the Nucleophile in the catalytic mechanism. NAD(+) is bound at residue R169. 195-196 (HG) contributes to the D-glyceraldehyde 3-phosphate binding site. Q302 is a binding site for NAD(+).

This sequence belongs to the glyceraldehyde-3-phosphate dehydrogenase family. As to quaternary structure, homotetramer.

Its subcellular location is the cytoplasm. The catalysed reaction is D-glyceraldehyde 3-phosphate + phosphate + NADP(+) = (2R)-3-phospho-glyceroyl phosphate + NADPH + H(+). The enzyme catalyses D-glyceraldehyde 3-phosphate + phosphate + NAD(+) = (2R)-3-phospho-glyceroyl phosphate + NADH + H(+). It participates in carbohydrate degradation; glycolysis; pyruvate from D-glyceraldehyde 3-phosphate: step 1/5. The polypeptide is Glyceraldehyde-3-phosphate dehydrogenase (Pyrobaculum calidifontis (strain DSM 21063 / JCM 11548 / VA1)).